A 281-amino-acid polypeptide reads, in one-letter code: NADPH-dependent 7-cyano-7-deazaguanine reductase (281 aa).

88–90 (IES) contacts substrate. 90 to 91 (SK) contacts NADPH. C189 acts as the Thioimide intermediate in catalysis. Residue D196 is the Proton donor of the active site. 228–229 (HE) contributes to the substrate binding site. Position 257 to 258 (257 to 258 (RG)) interacts with NADPH.

This sequence belongs to the GTP cyclohydrolase I family. QueF type 2 subfamily. Homodimer.

The protein resides in the cytoplasm. It carries out the reaction 7-aminomethyl-7-carbaguanine + 2 NADP(+) = 7-cyano-7-deazaguanine + 2 NADPH + 3 H(+). It participates in tRNA modification; tRNA-queuosine biosynthesis. In terms of biological role, catalyzes the NADPH-dependent reduction of 7-cyano-7-deazaguanine (preQ0) to 7-aminomethyl-7-deazaguanine (preQ1). The polypeptide is NADPH-dependent 7-cyano-7-deazaguanine reductase (Yersinia enterocolitica serotype O:8 / biotype 1B (strain NCTC 13174 / 8081)).